The chain runs to 239 residues: Exosome complex exonuclease RRP46 homolog (239 aa).

N-acetylmethionine is present on methionine 1.

The protein belongs to the RNase PH family. Probable component of the RNA exosome complex.

Its subcellular location is the nucleus. The protein resides in the nucleolus. Functionally, probable component of the exosome 3'-&gt;5' exoribonuclease complex, a complex that degrades inherently unstable mRNAs containing AU-rich elements (AREs) within their 3'-untranslated regions. The chain is Exosome complex exonuclease RRP46 homolog from Arabidopsis thaliana (Mouse-ear cress).